The chain runs to 644 residues: Macrolide export ATP-binding/permease protein MacB (644 aa).

The 239-residue stretch at 4 to 242 folds into the ABC transporter domain; it reads IECKNINRYF…SNVGRIREKA (239 aa). Residue 40–47 participates in ATP binding; the sequence is GQSGSGKS. Helical transmembrane passes span 270–290, 524–544, 574–594, and 607–627; these read LLTM…VALG, IALI…LVSV, LICV…SLVF, and AMSV…FGFM.

Belongs to the ABC transporter superfamily. Macrolide exporter (TC 3.A.1.122) family. Homodimer.

It localises to the cell inner membrane. Non-canonical ABC transporter that contains transmembrane domains (TMD), which form a pore in the inner membrane, and an ATP-binding domain (NBD), which is responsible for energy generation. Confers resistance against macrolides. The sequence is that of Macrolide export ATP-binding/permease protein MacB from Neisseria meningitidis serogroup B (strain ATCC BAA-335 / MC58).